The primary structure comprises 107 residues: FK506-binding protein 1 (107 aa).

One can recognise a PPIase FKBP-type domain in the interval 19 to 107; that stretch reads GSNVTVHHAG…VFEVELITFK (89 aa).

It belongs to the FKBP-type PPIase family.

It carries out the reaction [protein]-peptidylproline (omega=180) = [protein]-peptidylproline (omega=0). Inhibited by both FK506 and rapamycin. PPIases accelerate the folding of proteins by catalyzing the cis-trans isomerization of proline imidic peptide bonds in oligopeptides. This is FK506-binding protein 1 (fkbp1) from Dictyostelium discoideum (Social amoeba).